A 63-amino-acid polypeptide reads, in one-letter code: Adipokinetic prohormone type 1 (63 aa).

The N-terminal stretch at 1 to 22 (MVQRCALVVLLVVAVAAALCSA) is a signal peptide. Residue Gln23 is modified to Pyrrolidone carboxylic acid. Thr32 is subject to Threonine amide.

This sequence belongs to the AKH/HRTH/RPCH family.

The protein localises to the secreted. This hormone, released from cells in the corpora cardiaca, causes release of diglycerides from the fat body and stimulation of muscles to use these diglycerides as an energy source during energy-demanding processes. This Locusta migratoria (Migratory locust) protein is Adipokinetic prohormone type 1.